The sequence spans 126 residues: Large ribosomal subunit protein uL22 (126 aa).

Belongs to the universal ribosomal protein uL22 family. In terms of assembly, part of the 50S ribosomal subunit.

Its function is as follows. This protein binds specifically to 23S rRNA; its binding is stimulated by other ribosomal proteins, e.g. L4, L17, and L20. It is important during the early stages of 50S assembly. It makes multiple contacts with different domains of the 23S rRNA in the assembled 50S subunit and ribosome. Functionally, the globular domain of the protein is located near the polypeptide exit tunnel on the outside of the subunit, while an extended beta-hairpin is found that lines the wall of the exit tunnel in the center of the 70S ribosome. The chain is Large ribosomal subunit protein uL22 from Paracoccus denitrificans (strain Pd 1222).